Consider the following 85-residue polypeptide: Large ribosomal subunit protein bL31B (85 aa).

This sequence belongs to the bacterial ribosomal protein bL31 family. Type B subfamily. As to quaternary structure, part of the 50S ribosomal subunit.

This chain is Large ribosomal subunit protein bL31B, found in Bifidobacterium longum subsp. infantis (strain ATCC 15697 / DSM 20088 / JCM 1222 / NCTC 11817 / S12).